A 248-amino-acid polypeptide reads, in one-letter code: 2,3-bisphosphoglycerate-dependent phosphoglycerate mutase (248 aa).

Residues 8 to 15 (RHGESGWN) and Arg-58 each bind substrate. His-9 acts as the Tele-phosphohistidine intermediate in catalysis. The segment at 82 to 101 (GTGEDRTEREDGSRKDRKEK) is disordered. Catalysis depends on Glu-124, which acts as the Proton donor/acceptor. Substrate-binding positions include 124 to 127 (ERYY) and Lys-135.

Belongs to the phosphoglycerate mutase family. BPG-dependent PGAM subfamily.

It carries out the reaction (2R)-2-phosphoglycerate = (2R)-3-phosphoglycerate. The protein operates within carbohydrate degradation; glycolysis; pyruvate from D-glyceraldehyde 3-phosphate: step 3/5. Its function is as follows. Catalyzes the interconversion of 2-phosphoglycerate and 3-phosphoglycerate. This is 2,3-bisphosphoglycerate-dependent phosphoglycerate mutase from Methanosarcina acetivorans (strain ATCC 35395 / DSM 2834 / JCM 12185 / C2A).